Here is a 362-residue protein sequence, read N- to C-terminus: Phosphoserine aminotransferase (362 aa).

L-glutamate is bound by residues Ser-9 and Arg-42. Pyridoxal 5'-phosphate-binding positions include 76–77 (GR), Trp-102, Thr-153, Asp-174, and Gln-197. Position 198 is an N6-(pyridoxal phosphate)lysine (Lys-198). 239–240 (NT) provides a ligand contact to pyridoxal 5'-phosphate.

Belongs to the class-V pyridoxal-phosphate-dependent aminotransferase family. SerC subfamily. In terms of assembly, homodimer. Pyridoxal 5'-phosphate is required as a cofactor.

Its subcellular location is the cytoplasm. It catalyses the reaction O-phospho-L-serine + 2-oxoglutarate = 3-phosphooxypyruvate + L-glutamate. The enzyme catalyses 4-(phosphooxy)-L-threonine + 2-oxoglutarate = (R)-3-hydroxy-2-oxo-4-phosphooxybutanoate + L-glutamate. It participates in amino-acid biosynthesis; L-serine biosynthesis; L-serine from 3-phospho-D-glycerate: step 2/3. Its pathway is cofactor biosynthesis; pyridoxine 5'-phosphate biosynthesis; pyridoxine 5'-phosphate from D-erythrose 4-phosphate: step 3/5. Catalyzes the reversible conversion of 3-phosphohydroxypyruvate to phosphoserine and of 3-hydroxy-2-oxo-4-phosphonooxybutanoate to phosphohydroxythreonine. The polypeptide is Phosphoserine aminotransferase (Escherichia coli O7:K1 (strain IAI39 / ExPEC)).